Consider the following 664-residue polypeptide: Protein LYK5 (664 aa).

A signal peptide spans 1–26 (MAACTLHALSVTLFLLLFFAVSPAKA). The Extracellular segment spans residues 27–277 (QQPYVNNHQL…DPPGSSSSHK (251 aa)). Residues Asn45, Asn81, Asn111, Asn125, and Asn129 are each glycosylated (N-linked (GlcNAc...) asparagine). Cystine bridges form between Cys52/Cys114, Cys58/Cys181, and Cys112/Cys179. 135 to 141 (GDETYFS) contributes to the chitin binding site. Asn144 carries an N-linked (GlcNAc...) asparagine glycan. Position 164–170 (164–170 (ERQLTPG)) interacts with chitin. Residues 195 to 238 (LTYLVAMGDSISGIAEMFNSTSAAITEGNELTSDNIFFFTPVLV) form the LysM domain. An N-linked (GlcNAc...) asparagine glycan is attached at Asn213. Residues 251–269 (PSPPPPPVVATPPQTPVDP) show a composition bias toward pro residues. The disordered stretch occupies residues 251 to 270 (PSPPPPPVVATPPQTPVDPP). The helical transmembrane segment at 278–298 (WIYIGIGIGAGLLLLLSILAL) threads the bilayer. Residues 299 to 664 (CFYKRRSKKK…DLLRSGSLGN (366 aa)) lie on the Cytoplasmic side of the membrane. In terms of domain architecture, Protein kinase spans 351–643 (KSAIESLTLY…TQVLTTLSMI (293 aa)). ATP is bound by residues 357 to 365 (LTLYRFNDL) and Lys395.

The protein belongs to the protein kinase superfamily. Ser/Thr protein kinase family.

The protein resides in the cell membrane. Functionally, may recognize microbe-derived N-acetylglucosamine (NAG)-containing ligands. This chain is Protein LYK5 (LYK5), found in Arabidopsis thaliana (Mouse-ear cress).